A 144-amino-acid polypeptide reads, in one-letter code: Gastric inhibitory polypeptide (144 aa).

Residues 1–21 (MVALKTCSLLLVLLFLAVGLG) form the signal peptide. 2 propeptides span residues 22–42 (EKEE…PRGP) and 87–144 (EARA…LRSQ). The segment at 92-112 (ELAGQSQRNEEKEAQGSSLPK) is disordered.

The protein belongs to the glucagon family. In terms of tissue distribution, highly expressed in the duodenum and jejunum.

The protein localises to the secreted. Its function is as follows. Potent stimulator of insulin secretion and relatively poor inhibitor of gastric acid secretion. This is Gastric inhibitory polypeptide (Gip) from Rattus norvegicus (Rat).